The primary structure comprises 506 residues: Maturase K (506 aa).

This sequence belongs to the intron maturase 2 family. MatK subfamily.

The protein resides in the plastid. It is found in the chloroplast. In terms of biological role, usually encoded in the trnK tRNA gene intron. Probably assists in splicing its own and other chloroplast group II introns. This Melilotus indicus (Sourclover) protein is Maturase K.